Reading from the N-terminus, the 185-residue chain is Dirigent protein 12 (185 aa).

The signal sequence occupies residues 1–25 (MTNQIYKQVFSFFLSVLLLQSSTVS). A disulfide bridge connects residues cysteine 37 and cysteine 184. Asparagine 56 and asparagine 120 each carry an N-linked (GlcNAc...) asparagine glycan.

Belongs to the plant dirigent protein family. As to quaternary structure, homodimer. Seed coat specific expression.

Its subcellular location is the secreted. It localises to the extracellular space. The protein resides in the apoplast. Its function is as follows. Dirigent proteins impart stereoselectivity on the phenoxy radical-coupling reaction, yielding optically active lignans from two molecules of coniferyl alcohol in the biosynthesis of lignans, flavonolignans, and alkaloids and thus plays a central role in plant secondary metabolism. Required for seed accumulation of neolignans. The sequence is that of Dirigent protein 12 (DIR12) from Arabidopsis thaliana (Mouse-ear cress).